Reading from the N-terminus, the 309-residue chain is ESX-3 secretion system protein EccE3 (309 aa).

2 helical membrane-spanning segments follow: residues 5 to 25 (IALA…QTTT) and 29 to 49 (VLGV…GMFL).

Belongs to the EccE family. In terms of assembly, part of the ESX-3 / type VII secretion system (T7SS), which is composed of cytosolic and membrane components. The ESX-3 membrane complex is composed of EccB3, EccC3, EccD3 and EccE3.

It localises to the cell inner membrane. Functionally, part of the ESX-3 specialized secretion system, which is required for siderophore-mediated iron acquisition and for the secretion of EsxH and EsxG. The sequence is that of ESX-3 secretion system protein EccE3 from Mycolicibacterium smegmatis (strain ATCC 700084 / mc(2)155) (Mycobacterium smegmatis).